The following is a 198-amino-acid chain: Heme oxygenase PigA (198 aa).

H26 serves as a coordination point for heme b.

This sequence belongs to the heme oxygenase family.

It carries out the reaction heme b + 3 AH2 + 3 O2 + 2 H(+) = biliverdin IXbeta + CO + Fe(2+) + 3 A + 3 H2O. It catalyses the reaction heme b + 3 AH2 + 3 O2 + 3 H(+) = biliverdin IXdelta + CO + Fe(2+) + 3 A + 3 H2O. Functionally, involved in heme degradation. Catalyzes the degradation of heme to biliverdin, with the release of iron. Forms biliverdin delta (70%) and beta (30%). Under anaerobic conditions ferredoxin--NADP(+) reductase (fpr) can provide the necessary electrons; Bfd is not required. This chain is Heme oxygenase PigA, found in Pseudomonas aeruginosa (strain ATCC 15692 / DSM 22644 / CIP 104116 / JCM 14847 / LMG 12228 / 1C / PRS 101 / PAO1).